We begin with the raw amino-acid sequence, 412 residues long: Lipoyl synthase, mitochondrial (412 aa).

7 residues coordinate [4Fe-4S] cluster: cysteine 127, cysteine 132, cysteine 138, cysteine 159, cysteine 163, cysteine 166, and serine 375. Positions serine 142–leucine 364 constitute a Radical SAM core domain.

This sequence belongs to the radical SAM superfamily. Lipoyl synthase family. [4Fe-4S] cluster is required as a cofactor.

The protein resides in the mitochondrion. It catalyses the reaction [[Fe-S] cluster scaffold protein carrying a second [4Fe-4S](2+) cluster] + N(6)-octanoyl-L-lysyl-[protein] + 2 oxidized [2Fe-2S]-[ferredoxin] + 2 S-adenosyl-L-methionine + 4 H(+) = [[Fe-S] cluster scaffold protein] + N(6)-[(R)-dihydrolipoyl]-L-lysyl-[protein] + 4 Fe(3+) + 2 hydrogen sulfide + 2 5'-deoxyadenosine + 2 L-methionine + 2 reduced [2Fe-2S]-[ferredoxin]. The protein operates within protein modification; protein lipoylation via endogenous pathway; protein N(6)-(lipoyl)lysine from octanoyl-[acyl-carrier-protein]: step 2/2. Functionally, catalyzes the radical-mediated insertion of two sulfur atoms into the C-6 and C-8 positions of the octanoyl moiety bound to the lipoyl domains of lipoate-dependent enzymes, thereby converting the octanoylated domains into lipoylated derivatives. In Leishmania infantum, this protein is Lipoyl synthase, mitochondrial.